The following is a 312-amino-acid chain: Methionyl-tRNA formyltransferase (312 aa).

A (6S)-5,6,7,8-tetrahydrofolate-binding site is contributed by 112–115; the sequence is SLLP.

The protein belongs to the Fmt family.

It carries out the reaction L-methionyl-tRNA(fMet) + (6R)-10-formyltetrahydrofolate = N-formyl-L-methionyl-tRNA(fMet) + (6S)-5,6,7,8-tetrahydrofolate + H(+). Its function is as follows. Attaches a formyl group to the free amino group of methionyl-tRNA(fMet). The formyl group appears to play a dual role in the initiator identity of N-formylmethionyl-tRNA by promoting its recognition by IF2 and preventing the misappropriation of this tRNA by the elongation apparatus. This chain is Methionyl-tRNA formyltransferase, found in Syntrophus aciditrophicus (strain SB).